The following is a 98-amino-acid chain: Citrate lyase acyl carrier protein (98 aa).

S14 is modified (O-(phosphoribosyl dephospho-coenzyme A)serine).

This sequence belongs to the CitD family. As to quaternary structure, oligomer with a subunit composition of (alpha,beta,gamma)6.

The protein localises to the cytoplasm. In terms of biological role, covalent carrier of the coenzyme of citrate lyase. The polypeptide is Citrate lyase acyl carrier protein (Shigella flexneri).